The following is a 222-amino-acid chain: Thiamine-phosphate synthase (222 aa).

4-amino-2-methyl-5-(diphosphooxymethyl)pyrimidine is bound by residues 44–48 and Asn-79; that span reads QFREK. Mg(2+) is bound by residues Asp-80 and Asp-99. 4-amino-2-methyl-5-(diphosphooxymethyl)pyrimidine is bound at residue Ser-117. Residue 143-145 participates in 2-[(2R,5Z)-2-carboxy-4-methylthiazol-5(2H)-ylidene]ethyl phosphate binding; that stretch reads TET. Lys-146 contributes to the 4-amino-2-methyl-5-(diphosphooxymethyl)pyrimidine binding site. Residues Gly-175 and 195 to 196 contribute to the 2-[(2R,5Z)-2-carboxy-4-methylthiazol-5(2H)-ylidene]ethyl phosphate site; that span reads IS.

It belongs to the thiamine-phosphate synthase family. As to quaternary structure, monomer. Requires Mg(2+) as cofactor.

The catalysed reaction is 2-[(2R,5Z)-2-carboxy-4-methylthiazol-5(2H)-ylidene]ethyl phosphate + 4-amino-2-methyl-5-(diphosphooxymethyl)pyrimidine + 2 H(+) = thiamine phosphate + CO2 + diphosphate. It carries out the reaction 2-(2-carboxy-4-methylthiazol-5-yl)ethyl phosphate + 4-amino-2-methyl-5-(diphosphooxymethyl)pyrimidine + 2 H(+) = thiamine phosphate + CO2 + diphosphate. The enzyme catalyses 4-methyl-5-(2-phosphooxyethyl)-thiazole + 4-amino-2-methyl-5-(diphosphooxymethyl)pyrimidine + H(+) = thiamine phosphate + diphosphate. Its pathway is cofactor biosynthesis; thiamine diphosphate biosynthesis; thiamine phosphate from 4-amino-2-methyl-5-diphosphomethylpyrimidine and 4-methyl-5-(2-phosphoethyl)-thiazole: step 1/1. Functionally, condenses 4-methyl-5-(beta-hydroxyethyl)thiazole monophosphate (THZ-P) and 2-methyl-4-amino-5-hydroxymethyl pyrimidine pyrophosphate (HMP-PP) to form thiamine monophosphate (TMP). Is also able to use the 2-methoxy analog MeO-HMP-PP, as substrate in vitro, but not the 2-trifluoromethyl analog CF(3)-HMP-PP. The chain is Thiamine-phosphate synthase (thiE) from Bacillus subtilis (strain 168).